The chain runs to 519 residues: Laccase-2 (519 aa).

The signal sequence occupies residues 1-20; it reads MGLQRFSFFVTLALVARSLA. Plastocyanin-like domains are found at residues 22 to 147 and 159 to 301; these read IGPV…FVVY and VDNE…ILRY. An N-linked (GlcNAc...) asparagine glycan is attached at asparagine 74. Residues histidine 84, histidine 86, histidine 129, and histidine 131 each coordinate Cu cation. Cystine bridges form between cysteine 105–cysteine 508 and cysteine 137–cysteine 225. N-linked (GlcNAc...) asparagine glycosylation is found at asparagine 161, asparagine 228, asparagine 237, asparagine 271, asparagine 353, and asparagine 361. One can recognise a Plastocyanin-like 3 domain in the interval 368–490; the sequence is TVPVLLQILS…AGFAIVFAED (123 aa). Cu cation contacts are provided by histidine 415, histidine 418, histidine 420, histidine 472, cysteine 473, histidine 474, and histidine 478.

The protein belongs to the multicopper oxidase family. In terms of assembly, homodimer. Cu cation is required as a cofactor.

It localises to the secreted. The enzyme catalyses 4 hydroquinone + O2 = 4 benzosemiquinone + 2 H2O. Lignin degradation and detoxification of lignin-derived products. This is Laccase-2 from Trametes villosa (White-rot fungus).